A 540-amino-acid polypeptide reads, in one-letter code: MFCNQCQEALNVIGCTKNGVCGKKGEVADLQDRLLYVLKSVSYYNLKARELGLNEETADKIVLDAFFATLTNTNFDKQAIESYIKKGFEIRDSIKAKLPAGTLPAEEDLPDVAKVTPENITGMDVAVHSTQNEDVRSLRELLTYGMKGMAAYAHHAYILGYKDEEIFKFIEKGLVATTDDTIGVDDLIGLVLECGQKGVSVLALLDKANTETYGSPEPTAVNIGVRGNPGILISGHDLLDLEQLLEQTKGTGIDVYTHGEMLPANSYPAFKKYDNFAGNYGNAWWRQNEEFEKFNGPVLMTTNCIIPPRESYRNRIYTTGVVGFEGLPHIHEKEDGTKDFTSLIEQAKMSKPPEQLESGTIMGGFAHEAALSVADKIIDAVKTGKISRFMVMAGCDGRHKERAYYTEFAKALPENTVILTAGCAKYRYNKLDLGDIGGIPRVLDAGQCNDCYSLVVIAQKLAEAFGLEDINDLPISYNIAWYEQKAVLVLLALLSLGVKNIVLGPTLPAFVSPNVLKVLVDNFNIRPNTTVEEDMKVLLG.

The [4Fe-4S] cluster site is built by C3, C6, C15, and C21. Residues H236, E260, C304, C395, C423, C448, E483, and K485 each coordinate hybrid [4Fe-2O-2S] cluster. Residue C395 is modified to Cysteine persulfide.

Belongs to the HCP family. It depends on [4Fe-4S] cluster as a cofactor. Hybrid [4Fe-2O-2S] cluster is required as a cofactor.

It is found in the cytoplasm. It carries out the reaction A + NH4(+) + H2O = hydroxylamine + AH2 + H(+). In terms of biological role, catalyzes the reduction of hydroxylamine to form NH(3) and H(2)O. The polypeptide is Hydroxylamine reductase (Methanosarcina mazei (strain ATCC BAA-159 / DSM 3647 / Goe1 / Go1 / JCM 11833 / OCM 88) (Methanosarcina frisia)).